The sequence spans 195 residues: IMP cyclohydrolase (195 aa).

The protein belongs to the archaeal IMP cyclohydrolase family.

The enzyme catalyses IMP + H2O = 5-formamido-1-(5-phospho-D-ribosyl)imidazole-4-carboxamide. It participates in purine metabolism; IMP biosynthesis via de novo pathway; IMP from 5-formamido-1-(5-phospho-D-ribosyl)imidazole-4-carboxamide: step 1/1. Its function is as follows. Catalyzes the cyclization of 5-formylamidoimidazole-4-carboxamide ribonucleotide to IMP. This is IMP cyclohydrolase from Haloquadratum walsbyi (strain DSM 16790 / HBSQ001).